Reading from the N-terminus, the 97-residue chain is YcgL domain-containing protein Pfl01_1389 (97 aa).

Residues 3–87 (RICSIYQSSK…AEEEYIEHLP (85 aa)) form the YcgL domain.

The polypeptide is YcgL domain-containing protein Pfl01_1389 (Pseudomonas fluorescens (strain Pf0-1)).